An 86-amino-acid chain; its full sequence is Kappa-theraphotoxin-Cg1a 6 (86 aa).

The N-terminal stretch at 1-21 is a signal peptide; it reads MKVSVLITLAVLGVMFVWASA. Residues 22-50 constitute a propeptide that is removed on maturation; sequence AELEERGSDQRDSPAWLKSMERIFQSEER. 3 cysteine pairs are disulfide-bonded: Cys52-Cys66, Cys59-Cys71, and Cys65-Cys78. Phe84 is subject to Phenylalanine amide.

It belongs to the neurotoxin 10 (Hwtx-1) family. 28 (Jztx-11) subfamily. Expressed by the venom gland.

The protein localises to the secreted. In terms of biological role, this toxin acts as a voltage-dependent gating-modifier. It inhibits the sodium conductance (IC(50)=124 nM) and slows the fast inactivation (EC(50)=1180 nM) of Nav1.5/SCN5A. It significantly shifts the activation to more depolarized voltages and decreases the deactivation of Nav1.5 currents upon extreme depolarization, but only slightly affects voltage-dependence of steady-state inactivation. In addition, this toxin causes an approximately five-fold decrease in the rate of recovery from inactivation and an approximately 1.9-fold reduction in the closed-state inactivation rate. This toxin integrates the functions of site 3 toxins (alpha-scorpion toxins) with site 4 toxins (beta-scorpion and spider toxins) by targeting multiple sites on Nav1.5. Also shows inhibition of voltage-gated potassium channels (5 uM completely inhibits Kv2.1/KCNB1, whereas 5 uM moderately inhibits Kv4.2/KCND2 Kv4.1/KCND1 channels). This chain is Kappa-theraphotoxin-Cg1a 6, found in Chilobrachys guangxiensis (Chinese earth tiger tarantula).